A 470-amino-acid chain; its full sequence is Putative dipeptidase TSTA_079200 (470 aa).

The chain crosses the membrane as a helical span at residues 40–60; sequence AWLFGLGTLGIILASVLLNPF. 2 residues coordinate Zn(2+): His-92 and Asp-94. A disulfide bond links Cys-143 and Cys-237. The N-linked (GlcNAc...) asparagine glycan is linked to Asn-188. A Zn(2+)-binding site is contributed by Glu-208. His-235 lines the substrate pocket. Zn(2+)-binding residues include His-279 and His-300. Residues Arg-311 and Asp-371 each coordinate substrate.

It belongs to the metallo-dependent hydrolases superfamily. Peptidase M19 family. Zn(2+) serves as cofactor.

It is found in the membrane. The enzyme catalyses an L-aminoacyl-L-amino acid + H2O = 2 an L-alpha-amino acid. Hydrolyzes a wide range of dipeptides. The polypeptide is Putative dipeptidase TSTA_079200 (Talaromyces stipitatus (strain ATCC 10500 / CBS 375.48 / QM 6759 / NRRL 1006) (Penicillium stipitatum)).